We begin with the raw amino-acid sequence, 767 residues long: Protein transport protein Sec23B (767 aa).

A2 bears the N-acetylalanine mark. C61, C66, C85, and C88 together coordinate Zn(2+). K564 is modified (N6-acetyllysine). One copy of the Gelsolin-like repeat lies at 634–720 (PEPVLLDSSS…EHGGSQARFL (87 aa)).

This sequence belongs to the SEC23/SEC24 family. SEC23 subfamily. As to quaternary structure, COPII is composed of at least five proteins: the Sec23/24 complex, the Sec13/31 complex and Sar1. Interacts with SAR1A. As to expression, ubiquitously expressed.

The protein localises to the cytoplasmic vesicle. Its subcellular location is the COPII-coated vesicle membrane. The protein resides in the endoplasmic reticulum membrane. It is found in the cytoplasm. It localises to the cytosol. In terms of biological role, component of the coat protein complex II (COPII) which promotes the formation of transport vesicles from the endoplasmic reticulum (ER). The coat has two main functions, the physical deformation of the endoplasmic reticulum membrane into vesicles and the selection of cargo molecules for their transport to the Golgi complex. This chain is Protein transport protein Sec23B, found in Homo sapiens (Human).